The primary structure comprises 122 residues: Lysozyme (122 aa).

Residues 3–118 form the I-type lysozyme domain; the sequence is GGIVSQRCLS…WNRLQKISGC (116 aa). Cystine bridges form between cysteine 10–cysteine 86, cysteine 13–cysteine 118, cysteine 15–cysteine 21, cysteine 26–cysteine 35, cysteine 48–cysteine 68, cysteine 58–cysteine 64, and cysteine 82–cysteine 100. The Proton donor role is filled by glutamate 18. Aspartate 29 serves as the catalytic Nucleophile. Substrate is bound at residue 41–47; it reads KEAYWID. Residues tyrosine 72, histidine 93, 93-95, and lysine 102 each bind substrate; that span reads HNG.

This sequence belongs to the glycosyl hydrolase 22 family. Type-I lysozyme subfamily. Monomer.

It is found in the secreted. The enzyme catalyses Hydrolysis of (1-&gt;4)-beta-linkages between N-acetylmuramic acid and N-acetyl-D-glucosamine residues in a peptidoglycan and between N-acetyl-D-glucosamine residues in chitodextrins.. In terms of biological role, has bacteriolytic activity against Gram-positive bacteria M.luteus. Also has chitinase activity. The chain is Lysozyme from Meretrix lusoria (Hard clam).